Reading from the N-terminus, the 70-residue chain is Aurein-3.1 (70 aa).

Positions 1-22 (MAFLKKSLFLVLFLGLVSLSIC) are cleaved as a signal peptide. Positions 23–49 (EKEKRQNEEDEDENEAANHEEGSEEKR) are excised as a propeptide. Residues 27-48 (RQNEEDEDENEAANHEEGSEEK) form a disordered region. Residues 38-48 (AANHEEGSEEK) are compositionally biased toward basic and acidic residues. An Isoleucine amide modification is found at Ile66.

As to expression, expressed by the skin dorsal glands.

Its subcellular location is the secreted. The protein localises to the target cell membrane. Functionally, amphipathic alpha-helical antimicrobial peptide with weak to potent activity against Gram-positive bacteria, and no activity against Gram-negative bacteria. Probably acts by disturbing membrane functions with its amphipathic structure. Shows anticancer activity. In Ranoidea aurea (Green and golden bell frog), this protein is Aurein-3.1.